Consider the following 536-residue polypeptide: Chaperonin GroEL (536 aa).

ATP-binding positions include 29-32 (TLGP), 86-90 (DGTTT), G413, 476-478 (DAA), and D492.

The protein belongs to the chaperonin (HSP60) family. As to quaternary structure, forms a cylinder of 14 subunits composed of two heptameric rings stacked back-to-back. Interacts with the co-chaperonin GroES.

Its subcellular location is the cytoplasm. The catalysed reaction is ATP + H2O + a folded polypeptide = ADP + phosphate + an unfolded polypeptide.. In terms of biological role, together with its co-chaperonin GroES, plays an essential role in assisting protein folding. The GroEL-GroES system forms a nano-cage that allows encapsulation of the non-native substrate proteins and provides a physical environment optimized to promote and accelerate protein folding. This Methanococcus vannielii (strain ATCC 35089 / DSM 1224 / JCM 13029 / OCM 148 / SB) protein is Chaperonin GroEL.